The sequence spans 90 residues: Signal recognition particle 19 kDa protein (90 aa).

It belongs to the SRP19 family. As to quaternary structure, part of the signal recognition particle protein translocation system, which is composed of SRP and FtsY. Archaeal SRP consists of a 7S RNA molecule of 300 nucleotides and two protein subunits: SRP54 and SRP19.

Its subcellular location is the cytoplasm. In terms of biological role, involved in targeting and insertion of nascent membrane proteins into the cytoplasmic membrane. Binds directly to 7S RNA and mediates binding of the 54 kDa subunit of the SRP. In Methanococcus aeolicus (strain ATCC BAA-1280 / DSM 17508 / OCM 812 / Nankai-3), this protein is Signal recognition particle 19 kDa protein.